The following is a 376-amino-acid chain: Arginine/serine-rich coiled-coil protein 2 (376 aa).

The disordered stretch occupies residues 1–171; sequence MIRTNFLLKQ…PSPPPFRGRN (171 aa). Residues 13-52 show a composition bias toward basic and acidic residues; sequence RHESKDKSSKRHKSEEHNDKEHSSDKGRERLNSSENGEDR. Phosphoserine is present on S45. Positions 53-155 are enriched in basic residues; it reads HKRKERKSSR…KRIEKPRRFS (103 aa). A coiled-coil region spans residues 171–214; that stretch reads NTAMDAQEALARRLERAKKLQEQREKEMVEKQKQQEMAAAAAAT. Residue K317 forms a Glycyl lysine isopeptide (Lys-Gly) (interchain with G-Cter in SUMO1); alternate linkage. K317 is covalently cross-linked (Glycyl lysine isopeptide (Lys-Gly) (interchain with G-Cter in SUMO2); alternate). At S318 the chain carries Phosphoserine.

This sequence belongs to the RSRC2 family.

This Rattus norvegicus (Rat) protein is Arginine/serine-rich coiled-coil protein 2 (Rsrc2).